A 208-amino-acid polypeptide reads, in one-letter code: Orotidine 5'-phosphate decarboxylase (208 aa).

Substrate contacts are provided by residues aspartate 7, lysine 29, 57 to 66 (DLKLADIPNT), serine 109, 162 to 172 (PGIGAQGGKAK), glycine 185, and arginine 186. The Proton donor role is filled by lysine 59.

It belongs to the OMP decarboxylase family. Type 1 subfamily. In terms of assembly, homodimer.

The catalysed reaction is orotidine 5'-phosphate + H(+) = UMP + CO2. It functions in the pathway pyrimidine metabolism; UMP biosynthesis via de novo pathway; UMP from orotate: step 2/2. Functionally, catalyzes the decarboxylation of orotidine 5'-monophosphate (OMP) to uridine 5'-monophosphate (UMP). The polypeptide is Orotidine 5'-phosphate decarboxylase (Pyrococcus abyssi (strain GE5 / Orsay)).